Reading from the N-terminus, the 891-residue chain is DNA mismatch repair protein MutS (891 aa).

Gly639–Ser646 provides a ligand contact to ATP. Positions Thr827–Phe854 are disordered.

Belongs to the DNA mismatch repair MutS family.

This protein is involved in the repair of mismatches in DNA. It is possible that it carries out the mismatch recognition step. This protein has a weak ATPase activity. This chain is DNA mismatch repair protein MutS, found in Treponema denticola (strain ATCC 35405 / DSM 14222 / CIP 103919 / JCM 8153 / KCTC 15104).